The following is a 30-amino-acid chain: Poly-His-poly-Gly peptide 2 (30 aa).

A compositionally biased stretch (basic residues) spans 1–18 (EDDHDHHHHHHHHHHHHG). The interval 1–30 (EDDHDHHHHHHHHHHHHGVGGGGGGGGGGA) is disordered. Residues 19-30 (VGGGGGGGGGGA) show a composition bias toward gly residues.

Expressed by the venom gland.

Its subcellular location is the secreted. Its function is as follows. May serve as a metalloproteinase inhibitor during glandular storage. Their inhibition may be instantly disengaged, by dilution or physiochemical change, when venom is injected into tissue of the victim. The sequence is that of Poly-His-poly-Gly peptide 2 from Atheris nitschei (Great lakes bush viper).